Reading from the N-terminus, the 238-residue chain is MKFSLSVALSLAAATAQAATQFCDQWGSVTEGNYILYNNLWGQAQATSGSQCTTFESLSGNTIVWNTKWSWSGGQGQVKSFANAALQFTPKKLSSVKSIDSTWTWNYSGSNIVADVAYDMFLSTSPGGDHNYEIMVWLGALGGAGPISSTGSPIATPTVAGIKFNLYLGPNGSMQVYSFVAQSTTKSFSGDMRDFFTYLEGNQGLSSDLYLVDVQAGTEPFSGSNAVFTVSDYSVSVA.

An N-terminal signal peptide occupies residues Met-1–Ala-18. Asn-106 and Asn-171 each carry an N-linked (GlcNAc...) asparagine glycan.

Belongs to the glycosyl hydrolase 12 (cellulase H) family.

The protein localises to the secreted. It carries out the reaction xyloglucan + H2O = xyloglucan oligosaccharides.. Functionally, catalyzes endohydrolysis of 1,4-beta-D-glucosidic linkages in xyloglucan with retention of the beta-configuration of the glycosyl residues. Specific for xyloglucan and does not hydrolyze other cell wall components. The polypeptide is Probable xyloglucan-specific endo-beta-1,4-glucanase A (xgeA) (Neosartorya fischeri (strain ATCC 1020 / DSM 3700 / CBS 544.65 / FGSC A1164 / JCM 1740 / NRRL 181 / WB 181) (Aspergillus fischerianus)).